We begin with the raw amino-acid sequence, 157 residues long: Xanthine-guanine phosphoribosyltransferase (157 aa).

5-phospho-alpha-D-ribose 1-diphosphate contacts are provided by residues 42 to 43 (RG) and 93 to 101 (DDLVDTGNT). Residue aspartate 94 participates in Mg(2+) binding. Residues aspartate 97 and isoleucine 140 each contribute to the guanine site. Xanthine contacts are provided by aspartate 97 and isoleucine 140. GMP contacts are provided by residues 97–101 (DTGNT) and 139–140 (WI).

The protein belongs to the purine/pyrimidine phosphoribosyltransferase family. XGPT subfamily. In terms of assembly, homotetramer. Mg(2+) serves as cofactor.

Its subcellular location is the cell inner membrane. It carries out the reaction GMP + diphosphate = guanine + 5-phospho-alpha-D-ribose 1-diphosphate. The enzyme catalyses XMP + diphosphate = xanthine + 5-phospho-alpha-D-ribose 1-diphosphate. It catalyses the reaction IMP + diphosphate = hypoxanthine + 5-phospho-alpha-D-ribose 1-diphosphate. Its pathway is purine metabolism; GMP biosynthesis via salvage pathway; GMP from guanine: step 1/1. It functions in the pathway purine metabolism; XMP biosynthesis via salvage pathway; XMP from xanthine: step 1/1. Functionally, purine salvage pathway enzyme that catalyzes the transfer of the ribosyl-5-phosphate group from 5-phospho-alpha-D-ribose 1-diphosphate (PRPP) to the N9 position of the 6-oxopurines guanine and xanthine to form the corresponding ribonucleotides GMP (guanosine 5'-monophosphate) and XMP (xanthosine 5'-monophosphate), with the release of PPi. To a lesser extent, also acts on hypoxanthine. This chain is Xanthine-guanine phosphoribosyltransferase, found in Actinobacillus pleuropneumoniae serotype 5b (strain L20).